A 594-amino-acid chain; its full sequence is Putative lipase ATG15-1 (594 aa).

At 1-12 (MRRRPLCTSASR) the chain is on the cytoplasmic side. Residues 13 to 33 (VTASLLLSFLAVSSAAELPIL) form a helical; Signal-anchor for type II membrane protein membrane-spanning segment. Residues 34-594 (PAPPISPQPH…ANHFVYVLHA (561 aa)) are Lumenal-facing. 5 N-linked (GlcNAc...) asparagine glycosylation sites follow: Asn-144, Asn-179, Asn-201, Asn-259, and Asn-283. Ser-299 (charge relay system) is an active-site residue. N-linked (GlcNAc...) asparagine glycosylation is found at Asn-432 and Asn-445. Positions 447-469 (TETTTTSTSKPTSTSKSSKSNTR) are enriched in low complexity. 2 disordered regions span residues 447–473 (TETT…TRTE) and 489–509 (TGTQ…TSTC). 2 N-linked (GlcNAc...) asparagine glycosylation sites follow: Asn-576 and Asn-582.

It belongs to the AB hydrolase superfamily. Lipase family. In terms of assembly, binds to both phosphatidylinositol (PI) and phosphatidylinositol 3,5-bisphosphate (PIP2).

The protein localises to the endosome. It localises to the multivesicular body membrane. Its subcellular location is the prevacuolar compartment membrane. The enzyme catalyses a triacylglycerol + H2O = a diacylglycerol + a fatty acid + H(+). Lipase which is essential for lysis of subvacuolar cytoplasm to vacuole targeted bodies and intravacuolar autophagic bodies. Involved in the lysis of intravacuolar multivesicular body (MVB) vesicles. The intravacuolar membrane disintegration by ATG15 is critical to life span extension. This is Putative lipase ATG15-1 (ATG15-1) from Phaeosphaeria nodorum (strain SN15 / ATCC MYA-4574 / FGSC 10173) (Glume blotch fungus).